A 935-amino-acid polypeptide reads, in one-letter code: C-1-tetrahydrofolate synthase, cytoplasmic (935 aa).

At Met1 the chain carries N-acetylmethionine. The interval 2 to 291 (APAGILNGKL…MLMQSTVESA (290 aa)) is methylenetetrahydrofolate dehydrogenase and methenyltetrahydrofolate cyclohydrolase (D/C) domain. Substrate contacts are provided by residues 52-56 (YINVK) and 99-101 (VQL). Residue Lys56 is part of the active site. Residues 172–174 (GRS) and Ser197 each bind NADP(+). Substrate is bound at residue 272-276 (PGGVG). The interval 310-935 (LNLKTPVPSD…PETEQVNGLF (626 aa)) is formyltetrahydrofolate synthetase domain. At Ser318 the chain carries Phosphoserine. ATP is bound at residue 380-387 (TPLGEGKS). Residues Ser413 and Ser490 each carry the phosphoserine modification.

This sequence in the N-terminal section; belongs to the tetrahydrofolate dehydrogenase/cyclohydrolase family. In the C-terminal section; belongs to the formate--tetrahydrofolate ligase family. Homodimer.

Its subcellular location is the cytoplasm. The enzyme catalyses (6R)-5,10-methylene-5,6,7,8-tetrahydrofolate + NADP(+) = (6R)-5,10-methenyltetrahydrofolate + NADPH. The catalysed reaction is (6R)-5,10-methenyltetrahydrofolate + H2O = (6R)-10-formyltetrahydrofolate + H(+). It catalyses the reaction (6S)-5,6,7,8-tetrahydrofolate + formate + ATP = (6R)-10-formyltetrahydrofolate + ADP + phosphate. Its pathway is one-carbon metabolism; tetrahydrofolate interconversion. Its function is as follows. Trifunctional enzyme that catalyzes the interconversion of three forms of one-carbon-substituted tetrahydrofolate: (6R)-5,10-methylene-5,6,7,8-tetrahydrofolate, 5,10-methenyltetrahydrofolate and (6S)-10-formyltetrahydrofolate. These derivatives of tetrahydrofolate are differentially required in nucleotide and amino acid biosynthesis, (6S)-10-formyltetrahydrofolate being required for purine biosynthesis while (6R)-5,10-methylene-5,6,7,8-tetrahydrofolate is used for serine and methionine biosynthesis for instance. This is C-1-tetrahydrofolate synthase, cytoplasmic (Mthfd1) from Mus musculus (Mouse).